Reading from the N-terminus, the 245-residue chain is Small ribosomal subunit protein uS2 (245 aa).

This sequence belongs to the universal ribosomal protein uS2 family.

This chain is Small ribosomal subunit protein uS2, found in Pseudomonas fluorescens (strain SBW25).